The following is a 282-amino-acid chain: Putative hydrolase Bmul_3283/BMULJ_05242 (282 aa).

Residues Glu-124, Glu-126, and Asp-155 each contribute to the Mg(2+) site.

Belongs to the FAH family. It depends on Mg(2+) as a cofactor.

This Burkholderia multivorans (strain ATCC 17616 / 249) protein is Putative hydrolase Bmul_3283/BMULJ_05242.